The sequence spans 1099 residues: Carbamoyl phosphate synthase large chain (1099 aa).

The carboxyphosphate synthetic domain stretch occupies residues 1 to 402 (MPKRTDLKSV…ALQKALRSLE (402 aa)). ATP contacts are provided by arginine 129, arginine 169, glycine 175, glycine 176, glutamate 208, isoleucine 210, glutamate 215, glycine 241, valine 242, histidine 243, glutamine 285, and glutamate 299. The region spanning 133-328 (KGVVERCGAE…IAKIATKLSL (196 aa)) is the ATP-grasp 1 domain. Mg(2+) is bound by residues glutamine 285, glutamate 299, and asparagine 301. Mn(2+) is bound by residues glutamine 285, glutamate 299, and asparagine 301. The segment at 403-546 (QKGSQLDFSH…YHYSSYDEED (144 aa)) is oligomerization domain. Residues 547–950 (EVALHSKPSI…AFAKSQAAAN (404 aa)) are carbamoyl phosphate synthetic domain. Residues 677 to 868 (SRVLDEAGLI…MAKAAALIGT (192 aa)) form the ATP-grasp 2 domain. Residues arginine 713, arginine 752, leucine 754, glutamate 759, glycine 784, isoleucine 785, histidine 786, serine 787, glutamine 827, and glutamate 839 each contribute to the ATP site. Residues glutamine 827, glutamate 839, and asparagine 841 each contribute to the Mg(2+) site. Mn(2+)-binding residues include glutamine 827, glutamate 839, and asparagine 841. The 149-residue stretch at 951–1099 (NALPTEGKIF…AENLKALQNG (149 aa)) folds into the MGS-like domain. An allosteric domain region spans residues 951–1099 (NALPTEGKIF…AENLKALQNG (149 aa)).

The protein belongs to the CarB family. As to quaternary structure, composed of two chains; the small (or glutamine) chain promotes the hydrolysis of glutamine to ammonia, which is used by the large (or ammonia) chain to synthesize carbamoyl phosphate. Tetramer of heterodimers (alpha,beta)4. The cofactor is Mg(2+). Mn(2+) serves as cofactor.

It catalyses the reaction hydrogencarbonate + L-glutamine + 2 ATP + H2O = carbamoyl phosphate + L-glutamate + 2 ADP + phosphate + 2 H(+). The catalysed reaction is hydrogencarbonate + NH4(+) + 2 ATP = carbamoyl phosphate + 2 ADP + phosphate + 2 H(+). It participates in amino-acid biosynthesis; L-arginine biosynthesis; carbamoyl phosphate from bicarbonate: step 1/1. The protein operates within pyrimidine metabolism; UMP biosynthesis via de novo pathway; (S)-dihydroorotate from bicarbonate: step 1/3. Large subunit of the glutamine-dependent carbamoyl phosphate synthetase (CPSase). CPSase catalyzes the formation of carbamoyl phosphate from the ammonia moiety of glutamine, carbonate, and phosphate donated by ATP, constituting the first step of 2 biosynthetic pathways, one leading to arginine and/or urea and the other to pyrimidine nucleotides. The large subunit (synthetase) binds the substrates ammonia (free or transferred from glutamine from the small subunit), hydrogencarbonate and ATP and carries out an ATP-coupled ligase reaction, activating hydrogencarbonate by forming carboxy phosphate which reacts with ammonia to form carbamoyl phosphate. The polypeptide is Carbamoyl phosphate synthase large chain (Arthrobacter sp. (strain FB24)).